The chain runs to 127 residues: UPF0102 protein Geob_1494 (127 aa).

This sequence belongs to the UPF0102 family.

In Geotalea daltonii (strain DSM 22248 / JCM 15807 / FRC-32) (Geobacter daltonii), this protein is UPF0102 protein Geob_1494.